The chain runs to 245 residues: tRNA pseudouridine synthase A (245 aa).

Asp52 functions as the Nucleophile in the catalytic mechanism. Position 111 (Tyr111) interacts with substrate.

Belongs to the tRNA pseudouridine synthase TruA family. As to quaternary structure, homodimer.

The enzyme catalyses uridine(38/39/40) in tRNA = pseudouridine(38/39/40) in tRNA. Functionally, formation of pseudouridine at positions 38, 39 and 40 in the anticodon stem and loop of transfer RNAs. The sequence is that of tRNA pseudouridine synthase A from Rickettsia africae (strain ESF-5).